A 461-amino-acid chain; its full sequence is ATP synthase subunit beta (461 aa).

151 to 158 (GGAGVGKT) provides a ligand contact to ATP.

It belongs to the ATPase alpha/beta chains family. F-type ATPases have 2 components, CF(1) - the catalytic core - and CF(0) - the membrane proton channel. CF(1) has five subunits: alpha(3), beta(3), gamma(1), delta(1), epsilon(1). CF(0) has three main subunits: a(1), b(2) and c(9-12). The alpha and beta chains form an alternating ring which encloses part of the gamma chain. CF(1) is attached to CF(0) by a central stalk formed by the gamma and epsilon chains, while a peripheral stalk is formed by the delta and b chains.

The protein resides in the cell inner membrane. The catalysed reaction is ATP + H2O + 4 H(+)(in) = ADP + phosphate + 5 H(+)(out). Its function is as follows. Produces ATP from ADP in the presence of a proton gradient across the membrane. The catalytic sites are hosted primarily by the beta subunits. In Alteromonas mediterranea (strain DSM 17117 / CIP 110805 / LMG 28347 / Deep ecotype), this protein is ATP synthase subunit beta.